Consider the following 178-residue polypeptide: Cytochrome b6-f complex iron-sulfur subunit (178 aa).

Residues 20-42 (LLTFGTATGVALGALYPVANYFM) traverse the membrane as a helical segment. Residues 65–161 (KTGWLANHQA…VDVDDDAVLV (97 aa)) enclose the Rieske domain. Positions 107, 109, 125, and 128 each coordinate [2Fe-2S] cluster. Cysteine 112 and cysteine 127 are disulfide-bonded.

It belongs to the Rieske iron-sulfur protein family. As to quaternary structure, the 4 large subunits of the cytochrome b6-f complex are cytochrome b6, subunit IV (17 kDa polypeptide, PetD), cytochrome f and the Rieske protein, while the 4 small subunits are PetG, PetL, PetM and PetN. The complex functions as a dimer. The cofactor is [2Fe-2S] cluster.

Its subcellular location is the cellular thylakoid membrane. It carries out the reaction 2 oxidized [plastocyanin] + a plastoquinol + 2 H(+)(in) = 2 reduced [plastocyanin] + a plastoquinone + 4 H(+)(out). In terms of biological role, component of the cytochrome b6-f complex, which mediates electron transfer between photosystem II (PSII) and photosystem I (PSI), cyclic electron flow around PSI, and state transitions. The protein is Cytochrome b6-f complex iron-sulfur subunit of Prochlorococcus marinus (strain MIT 9515).